A 487-amino-acid chain; its full sequence is MAAAAPASTGSKGVVRQVIGPVLDVEFPAGKLPKILNALRIEGTNTAGEAIGLTAEVQQLLGDHRVRAVAMSGTDGLVRGMEALDTGSPIAVPVGEATLGRIFNVLGEPVDEQGPVNTNVTSPIHREAPKLTELETKPKVFETGIKVIDLLAPYRQGGKIGLFGGAGVGKTVLIQELINNIAKEHGGVSVFGGVGERTREGNDLYEEFKESGVINADDLSKSKVALCYGQMNEPPGARMRVGLSALTMAEHFRDVNKQDVLLFVDNIFRFVQAGSEVSALLGRMPSAVGYQPTLGTDVGALQERVASTLEGSITSIQAVYVPADDLTDPAPATTFAHLDATTVLNRALASKGIYPAVDPLDSTSTMLQPAVVGDEHYRTARAVQSTLQRYKELQDIIAILGLDELSEDDRQTVDRARKIEKFLSQPFFVAEIFTGMPGKYVKLEDTISGFNQILAGDLDSLPEQSFYLVGNIDEVKAKAEKIAAESK.

Gly-164–Thr-171 lines the ATP pocket.

This sequence belongs to the ATPase alpha/beta chains family. In terms of assembly, F-type ATPases have 2 components, CF(1) - the catalytic core - and CF(0) - the membrane proton channel. CF(1) has five subunits: alpha(3), beta(3), gamma(1), delta(1), epsilon(1). CF(0) has four main subunits: a(1), b(1), b'(1) and c(9-12).

It localises to the cellular thylakoid membrane. The catalysed reaction is ATP + H2O + 4 H(+)(in) = ADP + phosphate + 5 H(+)(out). Produces ATP from ADP in the presence of a proton gradient across the membrane. The catalytic sites are hosted primarily by the beta subunits. The sequence is that of ATP synthase subunit beta from Synechococcus sp. (strain CC9311).